A 497-amino-acid polypeptide reads, in one-letter code: Glucose-6-phosphate isomerase (497 aa).

Glutamate 350 (proton donor) is an active-site residue. Residues histidine 381 and lysine 485 contribute to the active site.

Belongs to the GPI family.

The protein localises to the cytoplasm. It catalyses the reaction alpha-D-glucose 6-phosphate = beta-D-fructose 6-phosphate. It functions in the pathway carbohydrate biosynthesis; gluconeogenesis. The protein operates within carbohydrate degradation; glycolysis; D-glyceraldehyde 3-phosphate and glycerone phosphate from D-glucose: step 2/4. Functionally, catalyzes the reversible isomerization of glucose-6-phosphate to fructose-6-phosphate. The sequence is that of Glucose-6-phosphate isomerase from Legionella pneumophila.